A 207-amino-acid polypeptide reads, in one-letter code: ATP phosphoribosyltransferase (207 aa).

Belongs to the ATP phosphoribosyltransferase family. Short subfamily. As to quaternary structure, heteromultimer composed of HisG and HisZ subunits.

Its subcellular location is the cytoplasm. It carries out the reaction 1-(5-phospho-beta-D-ribosyl)-ATP + diphosphate = 5-phospho-alpha-D-ribose 1-diphosphate + ATP. Its pathway is amino-acid biosynthesis; L-histidine biosynthesis; L-histidine from 5-phospho-alpha-D-ribose 1-diphosphate: step 1/9. Functionally, catalyzes the condensation of ATP and 5-phosphoribose 1-diphosphate to form N'-(5'-phosphoribosyl)-ATP (PR-ATP). Has a crucial role in the pathway because the rate of histidine biosynthesis seems to be controlled primarily by regulation of HisG enzymatic activity. This chain is ATP phosphoribosyltransferase (hisG), found in Dictyoglomus turgidum (strain DSM 6724 / Z-1310).